The chain runs to 2963 residues: tRNA nuclease CdiA (2963 aa).

A signal peptide spans 1–29 (MIPIYLRQKLISYALIYLVAIQPIMPVMA). A two-partner system transport domain (TPS) region spans residues 35–320 (AQGSTALDKA…AQGNITLNSH (286 aa)). The interval 573 to 1074 (GNVVAQEHAQ…MVLNTASLLN (502 aa)) is FHA-1. Residues 1075-1342 (RRDGFSVTEK…KPLTRAQLSD (268 aa)) form a receptor binding domain (RBD) region. The YP domain stretch occupies residues 1343 to 1528 (YPLPDSNNGL…LAKAEQAHLQ (186 aa)). The tract at residues 1529–1751 (GSVISGNKVE…ATLQAERDVN (223 aa)) is periplasmic FHA-1 repeat (pFR). The segment covering 1759–1770 (TRNQHIDSEDKT) has biased composition (basic and acidic residues). 2 disordered regions span residues 1759-1787 (TRNQHIDSEDKTTGYTRSTLSSGGDLTAS) and 1992-2012 (SKSSRQQINQEGSKQSESASA). The tract at residues 1762 to 2314 (QHIDSEDKTT…DSDNYNSIQK (553 aa)) is FHA-2. Residues 1771 to 1782 (TGYTRSTLSSGG) are compositionally biased toward polar residues. Residues 2694 to 2697 (VEDN) carry the VEDN CT cleavage motif motif. The interval 2694 to 2963 (VEDNNLSFGK…TGRVRNFHPN (270 aa)) is C-terminal effector domain (CT).

In the N-terminal section; belongs to the CdiA toxin family. The protein in the C-terminal section; belongs to the bacterial EndoU family. As to quaternary structure, forms a 1:1 complex with cognate immunity protein CdiI.

Its subcellular location is the secreted. It localises to the target cell. It is found in the target cell cytoplasm. Its function is as follows. Toxic component of a toxin-immunity protein module, which functions as a cellular contact-dependent growth inhibition (CDI) system. CDI modules allow bacteria to communicate with and inhibit the growth of closely related neighboring bacteria in a contact-dependent fashion. Targeting of the CT domain (residues 2824-2963) in the absence of immunity protein inhibits cell growth and causes tRNA(UUC-Glu) cleavage in the anticodon loop; expression of cognate immunity protein CdiI-43969 neutralizes growth inhibition and tRNA(UUC-Glu) remains intact, whereas non-cognate immunity proteins do not confer protection from the toxic effects. The CdiA protein is thought to be exported from the cell through the central lumen of CdiB, the other half of its two-partner system (TPS). The TPS domain probably remains associated with CdiB while the FHA-1 domain forms an extended filament with the receptor-binding domain (RBD) at its extremity; in the secretion arrested state the C-terminus of the RBD and YP domains form a hairpin-like structure as the FHA-2, PT and CT domains are periplasmic. The YP domain is probably responsible for this arrest at the point where it re-enters the host cell periplasm. Upon binding to a target cell outer membrane receptor a signal is transmitted to activate secretion. The filament elongates slightly, the rest of CdiA is secreted and the FHA-2 domain becomes stably associated with the target cell's outer membrane where it facilitates entry of the toxic CT domain into the target cell periplasm. From there the toxic CT domain is cleaved and gains access to the target cell cytoplasm via an inner membrane protein. This chain is tRNA nuclease CdiA, found in Yersinia mollaretii (strain ATCC 43969 / DSM 18520 / CIP 103324 / CNY 7263 / WAIP 204).